The sequence spans 368 residues: tRNA-specific 2-thiouridylase MnmA (368 aa).

ATP is bound by residues 6–13 (ALSGGVDS) and Met32. The active-site Nucleophile is the Cys92. Cys92 and Cys186 are disulfide-bonded. Gly116 provides a ligand contact to ATP. The tract at residues 134 to 136 (KDQ) is interaction with tRNA. The active-site Cysteine persulfide intermediate is Cys186. An interaction with tRNA region spans residues 292-293 (RY).

This sequence belongs to the MnmA/TRMU family.

The protein localises to the cytoplasm. The enzyme catalyses S-sulfanyl-L-cysteinyl-[protein] + uridine(34) in tRNA + AH2 + ATP = 2-thiouridine(34) in tRNA + L-cysteinyl-[protein] + A + AMP + diphosphate + H(+). In terms of biological role, catalyzes the 2-thiolation of uridine at the wobble position (U34) of tRNA, leading to the formation of s(2)U34. This is tRNA-specific 2-thiouridylase MnmA from Campylobacter hominis (strain ATCC BAA-381 / DSM 21671 / CCUG 45161 / LMG 19568 / NCTC 13146 / CH001A).